Reading from the N-terminus, the 121-residue chain is Large ribosomal subunit protein bL12 (121 aa).

This sequence belongs to the bacterial ribosomal protein bL12 family. Homodimer. Part of the ribosomal stalk of the 50S ribosomal subunit. Forms a multimeric L10(L12)X complex, where L10 forms an elongated spine to which 2 to 4 L12 dimers bind in a sequential fashion. Binds GTP-bound translation factors.

Its function is as follows. Forms part of the ribosomal stalk which helps the ribosome interact with GTP-bound translation factors. Is thus essential for accurate translation. The chain is Large ribosomal subunit protein bL12 from Lachnospira eligens (strain ATCC 27750 / DSM 3376 / VPI C15-48 / C15-B4) (Eubacterium eligens).